The sequence spans 3387 residues: MNQRKKVVRPPFNMLKRERNRVSTPQGLVKRFSTGLFSGKGPLRMVLAFITFLRVLSIPPTAGILKRWGQLKKNKAIKILIGFRKEIGRMLNILNGRKRSTITLLCLIPTVMAFSLSTRDGEPLMIVAKHERGRPLLFKTTEGINKCTLIAMDLGEMCEDTVTYKCPLLVNTEPEDIDCWCNLTSTWVMYGTCTQSGERRREKRSVALTPHSGMGLETRAETWMSSEGAWKHAQRVESWILRNPGFALLAGFMAYMIGQTGIQRTVFFVLMMLVAPSYGMRCVGVGNRDFVEGVSGGAWVDLVLEHGGCVTTMAQGKPTLDFELTKTTAKEVALLRTYCIEASISNITTATRCPTQGEPYLKEEQDQQYICRRDVVDRGWGNGCGLFGKGGVVTCAKFSCSGKITGNLVQIENLEYTVVVTVHNGDTHAVGNDTSNHGVTAMITPRSPSVEVKLPDYGELTLDCEPRSGIDFNEMILMKMKKKTWLVHKQWFLDLPLPWTAGADTSEVHWNYKERMVTFKVPHAKRQDVTVLGSQEGAMHSALAGATEVDSGDGNHMFAGHLKCKVRMEKLRIKGMSYTMCSGKFSIDKEMAETQHGTTVVKVKYEGAGAPCKVPIEIRDVNKEKVVGRIISSTPLAENTNSVTNIELEPPFGDSYIVIGVGNSALTLHWFRKGSSIGKMFESTYRGAKRMAILGETAWDFGSVGGLFTSLGKAVHQVFGSVYTTMFGGVSWMIRILIGFLVLWIGTNSRNTSMAMTCIAVGGITLFLGFTVQADMGCVASWSGKELKCGSGIFVVDNVHTWTEQYKFQPESPARLASAILNAHKDGVCGIRSTTRLENVMWKQITNELNYVLWEGGHDLTVVAGDVKGVLTKGKRALTPPVSDLKYSWKTWGKAKIFTPEARNSTFLIDGPDTSECPNERRAWNSLEVEDYGFGMFTTNIWMKFREGSSEVCDHRLMSAAIKDQKAVHADMGYWIESSKNQTWQIEKASLIEVKTCLWPKTHTLWSNGVLESQMLIPKSYAGPFSQHNYRQGYATQTVGPWHLGKLEIDFGECPGTTVTIQEDCDHRGPSLRTTTASGKLVTQWCCRSCTMPPLRFLGEDGCWYGMEIRPLSEKEENMVKSQVTAGQGTSETFSMGLLCLTLFVEECLRRRVTRKHMILVVVITLCAIILGGLTWMDLLRALIMLGDTMSGRIGGQIHLAIMAVFKMSPGYVLGVFLRKLTSRETALMVIGMAMTTVLSIPHDLMELIDGISLGLILLKIVTQFDNTQVGTLALSLTFIRSTMPLVMAWRTIMAVLFVVTLIPLCRTSCLQKQSHWVEITALILGAQALPVYLMTLMKGASRRSWPLNEGIMAVGLVSLLGSALLKNDVPLAGPMVAGGLLLAAYVMSGSSADLSLEKAANVQWDEMADITGSSPIIEVKQDEDGSFSIRDVEETNMITLLVKLALITVSGLYPLAIPVTMTLWYMWQVKTQRSGALWDVPSPAATKKAALSEGVYRIMQRGLFGKTQVGVGIHMEGVFHTMWHVTRGSVICHETGRLEPSWADVRNDMISYGGGWRLGDKWDKEEDVQVLAIEPGKNPKHVQTKPGLFKTLTGEIGAVTLDFKPGTSGSPIINRKGKVIGLYGNGVVTKSGDYVSAITQAERIGEPDYEVDEDIFRKKRLTIMDLHPGAGKTKRILPSIVREALKRRLRTLILAPTRVVAAEMEEALRGLPIRYQTPAVKSEHTGREIVDLMCHATFTTRLLSSTRVPNYNLIVMDEAHFTDPSSVAARGYISTRVEMGEAAAIFMTATPPGATDPFPQSNSPIEDIEREIPERSWNTGFDWITDYQGKTVWFVPSIKAGNDIANCLRKSGKKVIQLSRKTFDTEYPKTKLTDWDFVVTTDISEMGANFRAGRVIDPRRCLKPVILPDGPERVILAGPIPVTPASAAQRRGRIGRNPAQEDDQYVFSGDPLKNDEDHAHWTEAKMLLDNIYTPEGIIPTLFGPEREKTQAIDGEFRLRGEQRKTFVELMRRGDLPVWLSYKVASAGISYKDREWCFTGERNNQILEENMEVEIWTREGEKKKLRPRWLDARVYADPMALKDFKEFASGRKSITLDILTEIASLPTYLSSRAKLALDNIVMLHTTERGGRAYQHALNELPESLETLMLVALLGAMTAGIFLFFMQGKGIGKLSMGLITIAVASGLLWVAEIQPQWIAASIILEFFLMVLLIPEPEKQRTPQDNQLIYVILTILTIIGLIAANEMGLIEKTKTDFGFYQVKTETTILDVDLRPASAWTLYAVATTILTPMLRHTIENTSANLSLAAIANQAAVLMGLGKGWPLHRMDLGVPLLAMGCYSQVNPTTLTASLVMLLVHYAIIGPGLQAKATREAQKRTAAGIMKNPTVDGITVIDLEPISYDPKFEKQLGQVMLLVLCAGQLLLMRTTWAFCEVLTLATGPILTLWEGNPGRFWNTTIAVSTANIFRGSYLAGAGLAFSLIKNAQTPRRGTGTTGETLGEKWKRQLNSLDRKEFEEYKRSGILEVDRTEAKSALKDGSKIKHAVSRGSSKIRWIVERGMVKPKGKVVDLGCGRGGWSYYMATLKNVTEVKGYTKGGPGHEEPIPMATYGWNLVKLHSGVDVFYKPTEQVDTLLCDIGESSSNPTIEEGRTLRVLKMVEPWLSSKPEFCIKVLNPYMPTVIEELEKLQRKHGGNLVRCPLSRNSTHEMYWVSGASGNIVSSVNTTSKMLLNRFTTRHRKPTYEKDVDLGAGTRSVSTETEKPDMTIIGRRLQRLQEEHKETWHYDQENPYRTWAYHGSYEAPSTGSASSMVNGVVKLLTKPWDVIPMVTQLAMTDTTPFGQQRVFKEKVDTRTPQPKPGTRMVMTTTANWLWALLGKKKNPRLCTREEFISKVRSNAAIGAVFQEEQGWTSASEAVNDSRFWELVDKERALHQEGKCESCVYNMMGKREKKLGEFGRAKGSRAIWYMWLGARFLEFEALGFLNEDHWFGRENSWSGVEGEGLHRLGYILEEIDKKDGDLMYADDTAGWDTRITEDDLQNEELITEQMAPHHKILAKAIFKLTYQNKVVKVLRPTPRGAVMDIISRKDQRGSGQVGTYGLNTFTNMEVQLIRQMEAEGVITQDDMQNPKGLKERVEKWLKECGVDRLKRMAISGDDCVVKPLDERFGTSLLFLNDMGKVRKDIPQWEPSKGWKNWQEVPFCSHHFHKIFMKDGRSLVVPCRNQDELIGRARISQGAGWSLRETACLGKAYAQMWSLMYFHRRDLRLASMAICSAVPTEWFPTSRTTWSIHAHHQWMTTEDMLKVWNRVWIEDNPNMTDKTPVHSWEDIPYLGKREDLWCGSLIGLSSRATWAKNIHTAITQVRNLIGKEEYVDYMPVMKRYSAPSESEGVL.

Residues 1-100 (MNQRKKVVRP…LNILNGRKRS (100 aa)) lie on the Cytoplasmic side of the membrane. Positions 36 to 71 (LFSGKGPLRMVLAFITFLRVLSIPPTAGILKRWGQL) are hydrophobic; homodimerization of capsid protein C. Residues 100–113 (STITLLCLIPTVMA) constitute a propeptide, ER anchor for the capsid protein C, removed in mature form by serine protease NS3. A helical transmembrane segment spans residues 101-117 (TITLLCLIPTVMAFSLS). Residues 118 to 237 (TRDGEPLMIV…GAWKHAQRVE (120 aa)) are Extracellular-facing. An N-linked (GlcNAc...) asparagine; by host glycan is attached at N182. A helical membrane pass occupies residues 238-258 (SWILRNPGFALLAGFMAYMIG). Topologically, residues 259–265 (QTGIQRT) are cytoplasmic. A helical transmembrane segment spans residues 266-279 (VFFVLMMLVAPSYG). Residues 280 to 725 (MRCVGVGNRD…HQVFGSVYTT (446 aa)) are Extracellular-facing. Intrachain disulfides connect C282/C309, C339/C400, C353/C384, and C371/C395. Residue N346 is glycosylated (N-linked (GlcNAc...) asparagine; by host). The segment at 377–390 (DRGWGNGCGLFGKG) is fusion peptide. N432 is a glycosylation site (N-linked (GlcNAc...) asparagine; by host). Disulfide bonds link C464–C564 and C581–C612. The chain crosses the membrane as a helical span at residues 726 to 746 (MFGGVSWMIRILIGFLVLWIG). Residues 747-751 (TNSRN) lie on the Cytoplasmic side of the membrane. Residues 752–772 (TSMAMTCIAVGGITLFLGFTV) form a helical membrane-spanning segment. Residues 773–1194 (QADMGCVASW…MLGDTMSGRI (422 aa)) lie on the Extracellular side of the membrane. 6 disulfide bridges follow: C778-C789, C829-C917, C953-C997, C1054-C1103, C1065-C1087, and C1086-C1090. Residues N904 and N981 are each glycosylated (N-linked (GlcNAc...) asparagine; by host). The helical transmembrane segment at 1195–1218 (GGQIHLAIMAVFKMSPGYVLGVFL) threads the bilayer. The Lumenal segment spans residues 1219-1224 (RKLTSR). The chain crosses the membrane as a helical span at residues 1225–1243 (ETALMVIGMAMTTVLSIPH). The Cytoplasmic portion of the chain corresponds to 1244–1267 (DLMELIDGISLGLILLKIVTQFDN). Residues 1268–1288 (TQVGTLALSLTFIRSTMPLVM) form a helical membrane-spanning segment. Position 1289 (A1289) is a topological domain, lumenal. The chain crosses the membrane as a helical span at residues 1290–1308 (WRTIMAVLFVVTLIPLCRT). At 1309 to 1316 (SCLQKQSH) the chain is on the lumenal side. Residues 1317-1337 (WVEITALILGAQALPVYLMTL) form a helical membrane-spanning segment. Residues 1338–1345 (MKGASRRS) are Cytoplasmic-facing. The chain crosses the membrane as a helical span at residues 1346 to 1366 (WPLNEGIMAVGLVSLLGSALL). The Lumenal portion of the chain corresponds to 1367–1369 (KND). A helical membrane pass occupies residues 1370-1390 (VPLAGPMVAGGLLLAAYVMSG). The Cytoplasmic portion of the chain corresponds to 1391–1437 (SSADLSLEKAANVQWDEMADITGSSPIIEVKQDEDGSFSIRDVEETN). Residues 1397-1436 (LEKAANVQWDEMADITGSSPIIEVKQDEDGSFSIRDVEET) form an interacts with and activates NS3 protease region. The helical intramembrane region spans 1438-1458 (MITLLVKLALITVSGLYPLAI). Residues 1459–2143 (PVTMTLWYMW…QHALNELPES (685 aa)) are Cytoplasmic-facing. The Peptidase S7 domain occupies 1475 to 1652 (SGALWDVPSP…ERIGEPDYEV (178 aa)). Active-site charge relay system; for serine protease NS3 activity residues include H1525, D1549, and S1609. Residues 1654–1810 (EDIFRKKRLT…QSNSPIEDIE (157 aa)) enclose the Helicase ATP-binding domain. The tract at residues 1658-1661 (RKKR) is important for RNA-binding. 1667–1674 (LHPGAGKT) provides a ligand contact to ATP. The DEAH box motif lies at 1758-1761 (DEAH). The 168-residue stretch at 1820–1987 (TGFDWITDYQ…IIPTLFGPER (168 aa)) folds into the Helicase C-terminal domain. N6-acetyllysine; by host is present on K1862. Residues 2144-2164 (LETLMLVALLGAMTAGIFLFF) form a helical membrane-spanning segment. At 2165–2169 (MQGKG) the chain is on the lumenal side. Residues 2170–2190 (IGKLSMGLITIAVASGLLWVA) constitute an intramembrane region (helical). Residue E2191 is a topological domain, lumenal. Residues 2192–2212 (IQPQWIAASIILEFFLMVLLI) form a helical membrane-spanning segment. Residues 2213–2225 (PEPEKQRTPQDNQ) lie on the Cytoplasmic side of the membrane. A helical transmembrane segment spans residues 2226–2246 (LIYVILTILTIIGLIAANEMG). At 2247–2270 (LIEKTKTDFGFYQVKTETTILDVD) the chain is on the lumenal side. Residues 2271–2291 (LRPASAWTLYAVATTILTPML) constitute an intramembrane region (helical). At 2292–2301 (RHTIENTSAN) the chain is on the lumenal side. 2 N-linked (GlcNAc...) asparagine; by host glycosylation sites follow: N2297 and N2301. Residues 2302 to 2322 (LSLAAIANQAAVLMGLGKGWP) constitute an intramembrane region (helical). Residues 2323–2343 (LHRMDLGVPLLAMGCYSQVNP) lie on the Lumenal side of the membrane. The helical transmembrane segment at 2344 to 2364 (TTLTASLVMLLVHYAIIGPGL) threads the bilayer. The Cytoplasmic segment spans residues 2365 to 2409 (QAKATREAQKRTAAGIMKNPTVDGITVIDLEPISYDPKFEKQLGQ). A helical membrane pass occupies residues 2410 to 2430 (VMLLVLCAGQLLLMRTTWAFC). Over 2431-2455 (EVLTLATGPILTLWEGNPGRFWNTT) the chain is Lumenal. N2453 is a glycosylation site (N-linked (GlcNAc...) asparagine; by host). A helical transmembrane segment spans residues 2456 to 2476 (IAVSTANIFRGSYLAGAGLAF). Over 2477-3387 (SLIKNAQTPR…SAPSESEGVL (911 aa)) the chain is Cytoplasmic. One can recognise an mRNA cap 0-1 NS5-type MT domain in the interval 2489-2751 (TGTTGETLGE…DVDLGAGTRS (263 aa)). S2543 serves as a coordination point for S-adenosyl-L-methionine. The residue at position 2543 (S2543) is a Phosphoserine. The For 2'-O-MTase activity role is filled by K2548. Residues 2564–2567 (VVDL) carry the SUMO-interacting motif motif. The S-adenosyl-L-methionine site is built by G2573, W2574, T2591, K2592, D2618, and V2619. The For 2'-O-MTase activity role is filled by D2633. I2634 serves as a coordination point for S-adenosyl-L-methionine. Residues K2668 and E2704 each act as for 2'-O-MTase activity in the active site. An S-adenosyl-L-methionine-binding site is contributed by Y2706. Residues E2925, H2929, C2934, and C2937 each coordinate Zn(2+). Positions 3016–3166 (LMYADDTAGW…PLDERFGTSL (151 aa)) constitute a RdRp catalytic domain. Residues H3200, C3216, and C3335 each contribute to the Zn(2+) site.

In the N-terminal section; belongs to the class I-like SAM-binding methyltransferase superfamily. mRNA cap 0-1 NS5-type methyltransferase family. In terms of assembly, homodimer. Interacts (via N-terminus) with host EXOC1 (via C-terminus); this interaction results in EXOC1 degradation through the proteasome degradation pathway. Forms heterodimers with envelope protein E in the endoplasmic reticulum and Golgi. As to quaternary structure, homodimer; in the endoplasmic reticulum and Golgi. Interacts with protein prM. Interacts with non-structural protein 1. In terms of assembly, homodimer; Homohexamer when secreted. Interacts with envelope protein E. Interacts (via N-terminus) with serine protease NS3. As to quaternary structure, forms a heterodimer with serine protease NS3. May form homooligomers. In terms of assembly, forms a heterodimer with NS2B. Interacts with NS4B. Interacts with unphosphorylated RNA-directed RNA polymerase NS5; this interaction stimulates RNA-directed RNA polymerase NS5 guanylyltransferase activity. Interacts with host SHFL. Interacts with host MAVS; this interaction inhibits the synthesis of IFN-beta. Interacts with host SHFL. Interacts with host AUP1; the interaction occurs in the presence of Dengue virus NS4B and induces lipophagy which facilitates production of virus progeny particles. As to quaternary structure, interacts with serine protease NS3. In terms of assembly, homodimer. Interacts with host STAT2; this interaction inhibits the phosphorylation of the latter, and, when all viral proteins are present (polyprotein), targets STAT2 for degradation. Interacts with serine protease NS3. Interacts with host PAF1 complex; the interaction may prevent the recruitment of the PAF1 complex to interferon-responsive genes, and thus reduces the immune response. Post-translationally, specific enzymatic cleavages in vivo yield mature proteins. Cleavages in the lumen of endoplasmic reticulum are performed by host signal peptidase, whereas cleavages in the cytoplasmic side are performed by serine protease NS3. Signal cleavage at the 2K-4B site requires a prior NS3 protease-mediated cleavage at the 4A-2K site. Cleaved in post-Golgi vesicles by a host furin, releasing the mature small envelope protein M, and peptide pr. This cleavage is incomplete as up to 30% of viral particles still carry uncleaved prM. In terms of processing, N-glycosylated. Post-translationally, N-glycosylated. The excreted form is glycosylated and this is required for efficient secretion of the protein from infected cells. Acetylated by host KAT5. Acetylation modulates NS3 RNA-binding and unwinding activities and plays an important positive role for viral replication. In terms of processing, sumoylation of RNA-directed RNA polymerase NS5 increases NS5 protein stability allowing proper viral RNA replication. Post-translationally, phosphorylated on serines residues. This phosphorylation may trigger NS5 nuclear localization.

The protein resides in the virion. It is found in the host nucleus. The protein localises to the host cytoplasm. It localises to the host perinuclear region. Its subcellular location is the secreted. The protein resides in the virion membrane. It is found in the host endoplasmic reticulum membrane. The protein localises to the host mitochondrion. It catalyses the reaction Selective hydrolysis of -Xaa-Xaa-|-Yaa- bonds in which each of the Xaa can be either Arg or Lys and Yaa can be either Ser or Ala.. The catalysed reaction is RNA(n) + a ribonucleoside 5'-triphosphate = RNA(n+1) + diphosphate. The enzyme catalyses a ribonucleoside 5'-triphosphate + H2O = a ribonucleoside 5'-diphosphate + phosphate + H(+). It carries out the reaction ATP + H2O = ADP + phosphate + H(+). It catalyses the reaction a 5'-end (5'-triphosphoguanosine)-ribonucleoside in mRNA + S-adenosyl-L-methionine = a 5'-end (N(7)-methyl 5'-triphosphoguanosine)-ribonucleoside in mRNA + S-adenosyl-L-homocysteine. The catalysed reaction is a 5'-end (N(7)-methyl 5'-triphosphoguanosine)-ribonucleoside in mRNA + S-adenosyl-L-methionine = a 5'-end (N(7)-methyl 5'-triphosphoguanosine)-(2'-O-methyl-ribonucleoside) in mRNA + S-adenosyl-L-homocysteine + H(+). In terms of biological role, plays a role in virus budding by binding to the cell membrane and gathering the viral RNA into a nucleocapsid that forms the core of a mature virus particle. During virus entry, may induce genome penetration into the host cytoplasm after hemifusion induced by the surface proteins. Can migrate to the cell nucleus where it modulates host functions. Overcomes the anti-viral effects of host EXOC1 by sequestering and degrading the latter through the proteasome degradation pathway. Regulates the ATPase activity of the NS3 helicase activity. NS4A allows NS3 helicase to conserve energy during unwinding. Plays a role in the inhibition of the host innate immune response. Interacts with host MAVS and thereby prevents the interaction between RIGI and MAVS. In turn, IFN-beta production is impaired. Interacts with host AUP1 which mediates induction of lipophagy in host cells and facilitates production of virus progeny particles. Functionally, inhibits RNA silencing by interfering with host Dicer. Its function is as follows. Prevents premature fusion activity of envelope proteins in trans-Golgi by binding to envelope protein E at pH6.0. After virion release in extracellular space, gets dissociated from E dimers. In terms of biological role, acts as a chaperone for envelope protein E during intracellular virion assembly by masking and inactivating envelope protein E fusion peptide. prM is the only viral peptide matured by host furin in the trans-Golgi network probably to avoid catastrophic activation of the viral fusion activity in acidic Golgi compartment prior to virion release. prM-E cleavage is inefficient, and many virions are only partially matured. These uncleaved prM would play a role in immune evasion. May play a role in virus budding. Exerts cytotoxic effects by activating a mitochondrial apoptotic pathway through M ectodomain. May display a viroporin activity. Functionally, binds to host cell surface receptor and mediates fusion between viral and cellular membranes. Envelope protein is synthesized in the endoplasmic reticulum in the form of heterodimer with protein prM. They play a role in virion budding in the ER, and the newly formed immature particle is covered with 60 spikes composed of heterodimer between precursor prM and envelope protein E. The virion is transported to the Golgi apparatus where the low pH causes dissociation of PrM-E heterodimers and formation of E homodimers. prM-E cleavage is inefficient, and many virions are only partially matured. These uncleaved prM would play a role in immune evasion. Its function is as follows. Involved in immune evasion, pathogenesis and viral replication. Once cleaved off the polyprotein, is targeted to three destinations: the viral replication cycle, the plasma membrane and the extracellular compartment. Essential for viral replication. Required for formation of the replication complex and recruitment of other non-structural proteins to the ER-derived membrane structures. Excreted as a hexameric lipoparticle that plays a role against host immune response. Antagonizing the complement function. Binds to the host macrophages and dendritic cells. Inhibits signal transduction originating from Toll-like receptor 3 (TLR3). In terms of biological role, disrupts the host endothelial glycocalyx layer of host pulmonary microvascular endothelial cells, inducing degradation of sialic acid and shedding of heparan sulfate proteoglycans. NS1 induces expression of sialidases, heparanase, and activates cathepsin L, which activates heparanase via enzymatic cleavage. These effects are probably linked to the endothelial hyperpermeability observed in severe dengue disease. Component of the viral RNA replication complex that functions in virion assembly and antagonizes the host immune response. Functionally, required cofactor for the serine protease function of NS3. May have membrane-destabilizing activity and form viroporins. Its function is as follows. Displays three enzymatic activities: serine protease, NTPase and RNA helicase. NS3 serine protease, in association with NS2B, performs its autocleavage and cleaves the polyprotein at dibasic sites in the cytoplasm: C-prM, NS2A-NS2B, NS2B-NS3, NS3-NS4A, NS4A-2K and NS4B-NS5. NS3 RNA helicase binds RNA and unwinds dsRNA in the 3' to 5' direction. In terms of biological role, functions as a signal peptide for NS4B and is required for the interferon antagonism activity of the latter. Induces the formation of ER-derived membrane vesicles where the viral replication takes place. Inhibits interferon (IFN)-induced host STAT1 phosphorylation and nuclear translocation, thereby preventing the establishment of cellular antiviral state by blocking the IFN-alpha/beta pathway. Functionally, replicates the viral (+) and (-) RNA genome, and performs the capping of genomes in the cytoplasm. NS5 methylates viral RNA cap at guanine N-7 and ribose 2'-O positions. Besides its role in RNA genome replication, also prevents the establishment of cellular antiviral state by blocking the interferon-alpha/beta (IFN-alpha/beta) signaling pathway. Inhibits host TYK2 and STAT2 phosphorylation, thereby preventing activation of JAK-STAT signaling pathway. May reduce immune responses by preventing the recruitment of the host PAF1 complex to interferon-responsive genes. This is Genome polyprotein from Dengue virus type 4 (strain Dominica/814669/1981) (DENV-4).